A 245-amino-acid polypeptide reads, in one-letter code: Short-chain dehydrogenase/reductase pyiH (245 aa).

The NADP(+) site is built by Ile-18, Arg-42, Asp-68, and Asn-95. The active-site Proton donor is Ser-150.

Belongs to the short-chain dehydrogenases/reductases (SDR) family.

The protein operates within mycotoxin biosynthesis. Its function is as follows. Short-chain dehydrogenase/reductase; part of the gene cluster that mediates the biosynthesis of the mycotoxin pyrichalasin H, a tyrosine-derived cytochalasan that inhibits the growth of rice seedlings, but also inhibits lymphocyte capping and actin polymerization and alters cell morphology. Pyrichalasin H is indicated as the responsible agent for the genus-specific pathogenicity of M.grisea toward crabgrass. The first step in the pathway is catalyzed by the O-methyltransferase pyiA which methylates free tyrosine to generate the precursor O-methyltyrosine. The hybrid PKS-NRPS pyiS, assisted by the enoyl reductase pyiC, are responsible for fusion of the O-methyltyrosine precursor and the polyketide backbone. The polyketide synthase module (PKS) of pyiS is responsible for the synthesis of the polyketide backbone and the downstream nonribosomal peptide synthetase (NRPS) amidates the carboxyl end of the polyketide with the O-methyltyrosine precursor. As the NRPS A-domain demonstrates substrate tolerance, pyiS can also use phenylalanine, tyrosine and even para-chlorophenylalanine as amino acid precursor, which leads to the production of novel cytochalasans, including halogenated cytochalasans. Because pyiS lacks a designated enoylreductase (ER) domain, the required activity is provided the enoyl reductase pyiC. Reduction by the hydrolyase pyiE leads to 1,5-dihydropyrrolone, which is substrate for dehydration and intra-molecular Diels-Alder cyclization by the Diels-Alderase pyiF to yield the required isoindolone-fused macrocycle. The tailoring cytochrome P450 monooxygenases piyD and piyG catalyze the hydroxylation at C-18 and C-7, respectivily, whereas the short-chain dehydrogenase/reductase pyiH reduces the carbonyl at C-21 in preparation for the transfer of an acetyl group by the acetyltransferase pyiB. These 3 reactions whose order is not clear yet, lead to the production of O-methylpyrichalasin J, a deacetylated pyrichalasin H. Finally, pyiB to converts O-methylpyrichalasin J into the final product pyrichalasin H via acetylation of C-21. This is Short-chain dehydrogenase/reductase pyiH from Pyricularia grisea (Crabgrass-specific blast fungus).